We begin with the raw amino-acid sequence, 1085 residues long: MEDKEQQDNAKLENNESLKDLGVNVLSQSSLEEKIANDVTNFSNLQSLQQEETRLERSKTALQRYVNKKNHLTRKLNNTTRISVKQNLRDQIKNLQSDDIERVLKDIDDIQSRIKELKEQVDQGAENKGSKEGLQRPGETEKEFLIRTGKITAFGHKAGFSLDTANREYAKNDEQKDEDFEMATEQMVENLTDEDDNLSDQDYQMSGKESEDDEEEENDDKILKELEDLRFRGQPGEAKDDGDELYYQERLKKWVKQRSCGSQRSSDLPEWRRPHPNIPDAKLNSQFKIPGEIYSLLFNYQKTCVQWLYELYQQNCGGIIGDEMGLGKTIQVIAFIAALHHSGLLTGPVLIVCPATVMKQWCNEFQHWWPPLRTVILHSMGSGMASDQKFKMDENDLENLIMNSKPSDFSYEDWKNSTRTKKALESSYHLDKLIDKVVTDGHILITTYVGLRIHSDKLLKVKWQYAVLDEGHKIRNPDSEISLTCKKLKTHNRIILSGTPIQNNLTELWSLFDFIFPGKLGTLPVFQQQFVIPINIGGYANATNIQVQTGYKCAVALRDLISPYLLRRVKADVAKDLPQKKEMVLFCKLTKYQRSKYLEFLHSSDLNQIQNGKRNVLFGIDILRKICNHPDLLDRDTKRHNPDYGDPKRSGKMQVVKQLLLLWHKQGYKALLFTQSRQMLDILEEFISTKDPDLSHLNYLRMDGTTNIKGRQSLVDRFNNESFDVFLLTTRVGGLGVNLTGANRIIIFDPDWNPSTDMQARERAWRIGQKREVSIYRLMVGGSIEEKIYHRQIFKQFLTNRILTDPKQKRFFKIHELHDLFSLGGENGYSTEELNEEVQKHTENLKNSKSEESDDFEQLVNLSGVSKLESFYNGKEKKENSKTEDDRLIEGLLGGESNLETVMSHDSVVNSHAGSSSSNIITKEASRVAIEAVNALRKSRKKITKQYEIGTPTWTGRFGKAGKIRKRDPLKNKLTGSAAILGNITKSQKEASKEARQENYDDGITFARSKEINSNTKTLENIRAYLQKQNNFFSSSVSILNSIGVSLSDKEDVIKVRALLKTIAQFDKERKGWVLDEEFRNNNAS.

Residue Ser-30 is modified to Phosphoserine. 2 disordered regions span residues 118-141 (KEQV…GETE) and 190-219 (NLTD…EEND). The span at 128-141 (KGSKEGLQRPGETE) shows a compositional bias: basic and acidic residues. Residues 210 to 219 (SEDDEEEEND) are compositionally biased toward acidic residues. The region spanning 309 to 518 (YELYQQNCGG…WSLFDFIFPG (210 aa)) is the Helicase ATP-binding domain. 322-329 (DEMGLGKT) contributes to the ATP binding site. The short motif at 469-472 (DEGH) is the DEGH box element. The 164-residue stretch at 655–818 (VVKQLLLLWH…KRFFKIHELH (164 aa)) folds into the Helicase C-terminal domain.

It belongs to the SNF2/RAD54 helicase family.

It localises to the nucleus. It catalyses the reaction ATP + H2O = ADP + phosphate + H(+). Functionally, may be involved in the preferential repair of active genes. This is DNA repair and recombination protein RAD26 (RAD26) from Saccharomyces cerevisiae (strain ATCC 204508 / S288c) (Baker's yeast).